Consider the following 362-residue polypeptide: UDP-N-acetylglucosamine--N-acetylmuramyl-(pentapeptide) pyrophosphoryl-undecaprenol N-acetylglucosamine transferase (362 aa).

Residues R166, S196, and Q290 each contribute to the UDP-N-acetyl-alpha-D-glucosamine site.

Belongs to the glycosyltransferase 28 family. MurG subfamily.

It localises to the cell membrane. The catalysed reaction is Mur2Ac(oyl-L-Ala-gamma-D-Glu-L-Lys-D-Ala-D-Ala)-di-trans,octa-cis-undecaprenyl diphosphate + UDP-N-acetyl-alpha-D-glucosamine = beta-D-GlcNAc-(1-&gt;4)-Mur2Ac(oyl-L-Ala-gamma-D-Glu-L-Lys-D-Ala-D-Ala)-di-trans,octa-cis-undecaprenyl diphosphate + UDP + H(+). It functions in the pathway cell wall biogenesis; peptidoglycan biosynthesis. In terms of biological role, cell wall formation. Catalyzes the transfer of a GlcNAc subunit on undecaprenyl-pyrophosphoryl-MurNAc-pentapeptide (lipid intermediate I) to form undecaprenyl-pyrophosphoryl-MurNAc-(pentapeptide)GlcNAc (lipid intermediate II). This Staphylococcus carnosus (strain TM300) protein is UDP-N-acetylglucosamine--N-acetylmuramyl-(pentapeptide) pyrophosphoryl-undecaprenol N-acetylglucosamine transferase.